Here is a 228-residue protein sequence, read N- to C-terminus: Upstream activation factor subunit UAF30 (228 aa).

Positions 1–56 (MAELNDYSTMIDILLSDMDLETVTTKKVRMALKEVYAIDVESQGKAINKLIRKHLD) constitute a DEK-C domain. A compositionally biased stretch (basic and acidic residues) spans 89 to 111 (SKRSSGEEKNDSETKGTHVEKKK). Residues 89–118 (SKRSSGEEKNDSETKGTHVEKKKGTVSKSP) form a disordered region. The region spanning 119–195 (ISTRKVTLSK…HKILASHMTE (77 aa)) is the SWIB/MDM2 domain. Residues 209 to 228 (VRRKEKPIVSDSEQSDTKGI) are disordered. Phosphoserine occurs at positions 218, 220, and 223.

As to quaternary structure, component of the UAF (upstream activation factor) complex which consists of UAF30, RRN5, RRN9, RRN10, and histones H3 and H4.

It localises to the nucleus. It is found in the nucleolus. Functionally, nonessential component of the UAF (upstream activation factor) complex which interacts with the upstream element of the RNA polymerase I promoter and forms a stable preinitiation complex. Together with SPT15/TBP UAF seems to stimulate basal transcription to a fully activated level. UAF30 seems to play a role in silencing transcription by RNA polymerase II. The protein is Upstream activation factor subunit UAF30 (UAF30) of Saccharomyces cerevisiae (strain ATCC 204508 / S288c) (Baker's yeast).